A 117-amino-acid chain; its full sequence is MSLGIDMNVKESVLCIRLTGELDHHTAETLKQKVTQSLEKDDIRHIVLNLEDLSFMDSSGLGVILGRYKQIKQIGGEMVVCAISPAVKRLFDMSGLFKIIRFEQSEQQALLTLGVAS.

Positions 3–113 (LGIDMNVKES…QSEQQALLTL (111 aa)) constitute an STAS domain. Phosphoserine is present on S58.

This sequence belongs to the anti-sigma-factor antagonist family. In terms of processing, phosphorylated by SpoIIAB on a serine residue.

In terms of biological role, in the phosphorylated form it could act as an anti-anti-sigma factor that counteracts SpoIIAB and thus releases sigma f from inhibition. The sequence is that of Anti-sigma F factor antagonist (spoIIAA) from Bacillus subtilis (strain 168).